The following is a 1441-amino-acid chain: MIRMLVLIVVTAASPVYQRCFQDGAIVKQNPSKEAVTEVCLKDDVSMIKTEARYVKNATGVFSNNVAIRKWLVSDWHDCRPKKIVGGHINVIEVGDDLSLHTESYVCSADCTIGVDKETAQVRLQTDTTNHFEIAGTTVKSGWFKSTTYITLDQTCEHLKVSCAPKSVQFHACFNQHMSCVRFLHRTILPGSIANSICQNIEIIILVTLTLLIFILLSILSKTYICYLLMPIFIPIAYMYGVIYNKSCKKCKLCGLVYHPFTECGTHCVCGARYDTSDRMKLHRASGLCPGYKSLRAARVMCKSKGPASILSIITAVLVLTFVTPINSMVLGESKETFELEELPDDMLEMALRINSYYFTCILNYAVSWGLIIAGLLVGLIFKKYQHRFLNIYAMYCEECNMYHDKSGLKRHGDFTNKCRQCTCGQYEDATGLITHRKTYNCLVQYKAKWMMNFLIIYIFLILIKDSAIVGQATGTDFTTCLETESINWNCTGPFLNLGNCQKQQKKEPYTNIATQLKGLKAISVLDIPIITSIPDDIAGALRYIEEKEDFHVQLTTEYAMLSKYCDYYTQFSDNSGYSQTTWRVYLRSHDFEACILYPNQHFCKCVKNGEKCSSSNWDFANGMKNYYSGKQAKFDKDLNLALTALHHAFRGTSSAYIAAMLSKKSNDDLIAYTNKIKAKFPGNALLKAIIDYIAYMKGLPEMANFKYDEFWDELLYKPNPAKASNLARGKESSYNFKLAISSKSIKTCKNVKDVACLSPRSGAIYSSIIACGEPNGPSVYRKPSGGVFQSSTDRSIYCLLDSHCLEEFEAISQEELDAVKKSKCWEIEYPDVRPLQESDGAKSCRMKDSGNCNVATNRWPVMQCENDKFYYSELQKDYDKTQDIGHYCLSPGCTTIRYPINPKHISNCNWQVSRSSIAKIDVHNVEDIEQYKKAITQKLQTSLSLFKYAKTKNLPHIRPIYKYITMKETETAEGIESAYIESEVPALAGTSVGFKINSKEGKHLLDVIAYVKSASYSSVYAKLYSTGPTSGINTKHDELCTGPCPANINHQVGWLTFARERTSSWGCEEFGCLAVSDGCVFGSCQDIIKEELSVYRKETEEVTNVELCLTFSDKTYCTNLNPVTPIITDLFEVQFKTVETYSLPRIVAVQNHEIKIGQINDLGVYSKGCGNVQKVNGTVYGNGVPRFDYLCHLASRKEVIVRKCFDNDYQACKFLQSPASYRLEEDSGTVTIIDYKKILGTIKMKAILGDVKYKTFADSVDITAEGSCAGCINCFQNIHCELTLHTTIEASCPIKSSCTVFHDRILVTPNEHKYALKIVCTEKPGNTLTIKVCNTRIEASMALVDAKPIIELAPVDQTAYIREKDERCKTWMCRVRDEGLQVILEPFKNLFGSYIGIFYTFIISIIALLVIIYVLLPICFKLRDTLRKHDDAYKREMKIR.

The first 13 residues, 1-13 (MIRMLVLIVVTAA), serve as a signal peptide directing secretion. The Lumenal portion of the chain corresponds to 14 to 200 (SPVYQRCFQD…GSIANSICQN (187 aa)). Asn57 is a glycosylation site (N-linked (GlcNAc...) asparagine; by host). The chain crosses the membrane as a helical span at residues 201-221 (IEIIILVTLTLLIFILLSILS). Residues 222–305 (KTYICYLLMP…RAARVMCKSK (84 aa)) lie on the Cytoplasmic side of the membrane. Residues 306–326 (GPASILSIITAVLVLTFVTPI) form a helical membrane-spanning segment. At 327 to 365 (NSMVLGESKETFELEELPDDMLEMALRINSYYFTCILNY) the chain is on the lumenal side. Residues 366 to 386 (AVSWGLIIAGLLVGLIFKKYQ) form a helical membrane-spanning segment. The Cytoplasmic segment spans residues 387 to 452 (HRFLNIYAMY…LVQYKAKWMM (66 aa)). A helical transmembrane segment spans residues 453–473 (NFLIIYIFLILIKDSAIVGQA). Residues 474–1395 (TGTDFTTCLE…EPFKNLFGSY (922 aa)) lie on the Lumenal side of the membrane. 2 N-linked (GlcNAc...) asparagine; by host glycosylation sites follow: Asn490 and Asn1177. Residues 1396-1416 (IGIFYTFIISIIALLVIIYVL) traverse the membrane as a helical segment. Residues 1417–1441 (LPICFKLRDTLRKHDDAYKREMKIR) lie on the Cytoplasmic side of the membrane.

The protein belongs to the orthobunyavirus envelope glycoprotein family. In terms of assembly, glycoprotein C and Glycoprotein N interact with each other. In terms of processing, specific enzymatic cleavages in vivo yield mature proteins including nonstructural protein NSm, glycoprotein C, and glycoprotein N.

It localises to the virion membrane. The protein localises to the host Golgi apparatus membrane. The protein resides in the host endoplasmic reticulum membrane. Glycoprotein C and Glycoprotein N interact with each other and are present at the surface of the virion. They are able to attach the virion to a cell receptor and to promote fusion of membranes after endocytosis of the virion. In Bunyavirus La Crosse, this protein is Envelopment polyprotein (GP).